Reading from the N-terminus, the 790-residue chain is Tumor necrosis factor alpha-induced protein 3 (790 aa).

An N-acetylalanine modification is found at Ala-2. Residues 58–300 form a TRAF-binding region; it reads PQFREIIHKA…LTDPENEMKE (243 aa). Positions 92-263 constitute an OTU domain; the sequence is LVALKTNGDG…SHHFVPLVTL (172 aa). Asp-100 is a catalytic residue. The active-site Nucleophile is Cys-103. Interaction with ubiquitin regions lie at residues 157-159, 190-192, and 224-227; these read LCY, SLE, and FAPL. Catalysis depends on His-256, which acts as the Proton acceptor. Over residues 357 to 368 the composition is skewed to basic and acidic residues; that stretch reads QENSEQGRREGH. The disordered stretch occupies residues 357-377; that stretch reads QENSEQGRREGHAQNPMEPSV. Positions 369 to 775 are interaction with TNIP1; it reads AQNPMEPSVP…ACDHFGNAKC (407 aa). The segment at 381–416 adopts an A20-type 1 zinc-finger fold; that stretch reads SLMDVKCETPNCPFFMSVNTQPLCHECSERRQKNQN. An interaction with RIPK1 region spans residues 386-453; the sequence is KCETPNCPFF…EPLAWNPEES (68 aa). 4 residues coordinate Zn(2+): Cys-387, Cys-392, Cys-404, and Cys-407. 2 disordered regions span residues 415–434 and 447–468; these read QNKL…PGMA and AWNP…PSPF. Ser-459 is modified (phosphoserine). A20-type zinc fingers lie at residues 472–507 and 515–548; these read ETTA…LHAS and HLDP…AEAS. Zn(2+)-binding residues include Cys-478, Cys-483, Cys-495, Cys-498, Cys-521, Cys-524, Cys-536, and Cys-539. Positions 550–583 are disordered; sequence SLSTSLPPSCHQRSKSDPSRLVRSPSPHSCHRAG. Ser-575 carries the phosphoserine modification. An A20-type 4 zinc finger spans residues 601–636; it reads RTGTSKCRKAGCVYFGTPENKGFCTLCFIEYRENKH. The interval 605 to 655 is required for proteasomal degradation of UBE2N and UBE2D3, TRAF6 deubiquitination, and TAX1BP1 interaction with UBE2N; it reads SKCRKAGCVYFGTPENKGFCTLCFIEYRENKHFAAASGKVSPTASRFQNTI. The tract at residues 606 to 790 is sufficient for inhibitory activity of TNF-induced NF-kappa-B activity; it reads KCRKAGCVYF…ECFQFKQMYG (185 aa). Cys-607, Cys-612, Cys-624, and Cys-627 together coordinate Zn(2+). Residue Ser-645 is modified to Phosphoserine. The A20-type 5 zinc-finger motif lies at 651 to 686; the sequence is FQNTIPCLGRECGTLGSTMFEGYCQKCFIEAQNQRF. Positions 657, 662, 674, and 677 each coordinate Zn(2+). The span at 689 to 705 shows a compositional bias: basic and acidic residues; sequence AKRTEEQLRSSQRRDVP. A disordered region spans residues 689–712; it reads AKRTEEQLRSSQRRDVPRTTQSTS. A required for lysosomal localization and for TRAF2 lysosomal degradation region spans residues 697 to 790; sequence RSSQRRDVPR…ECFQFKQMYG (94 aa). A20-type zinc fingers lie at residues 710-745 and 756-790; these read STSR…RMGP and DPPK…QMYG. Zn(2+)-binding residues include Cys-716, Cys-721, Cys-733, Cys-736, Cys-762, Cys-767, Cys-779, and Cys-782.

It belongs to the peptidase C64 family. In terms of assembly, homodimer. Interacts with TNIP1, TAX1BP1 and TRAF2. Interacts with RNF11, ITCH and TAX1BP1 only after TNF stimulation; these interaction are transient and they are lost after 1 hour of stimulation with TNF. Interacts with YWHAZ and YWHAH. Interacts with IKBKG; the interaction is induced by TNF stimulation and by polyubiquitin. Interacts with RIPK1. Interacts with UBE2N; the interaction requires TAX1BP1. Interacts with TRAF6; the interaction is inhibited by HTLV-1 protein Tax. Post-translationally, proteolytically cleaved by MALT1 upon TCR stimulation; disrupts NF-kappa-B inhibitory function and results in increased IL-2 production. It is proposed that only a fraction of TNFAIP3 colocalized with TCR and CBM complex is cleaved, leaving the main TNFAIP3 pool intact.

It is found in the cytoplasm. It localises to the nucleus. The protein resides in the lysosome. It carries out the reaction Thiol-dependent hydrolysis of ester, thioester, amide, peptide and isopeptide bonds formed by the C-terminal Gly of ubiquitin (a 76-residue protein attached to proteins as an intracellular targeting signal).. Ubiquitin-editing enzyme that contains both ubiquitin ligase and deubiquitinase activities. Involved in immune and inflammatory responses signaled by cytokines, such as TNF-alpha and IL-1 beta, or pathogens via Toll-like receptors (TLRs) through terminating NF-kappa-B activity. Essential component of a ubiquitin-editing protein complex, comprising also RNF11, ITCH and TAX1BP1, that ensures the transient nature of inflammatory signaling pathways. In cooperation with TAX1BP1 promotes disassembly of E2-E3 ubiquitin protein ligase complexes in IL-1R and TNFR-1 pathways; affected are at least E3 ligases TRAF6, TRAF2 and BIRC2, and E2 ubiquitin-conjugating enzymes UBE2N and UBE2D3. In cooperation with TAX1BP1 promotes ubiquitination of UBE2N and proteasomal degradation of UBE2N and UBE2D3. Upon TNF stimulation, deubiquitinates 'Lys-63'-polyubiquitin chains on RIPK1 and catalyzes the formation of 'Lys-48'-polyubiquitin chains. This leads to RIPK1 proteasomal degradation and consequently termination of the TNF- or LPS-mediated activation of NF-kappa-B. Deubiquitinates TRAF6 probably acting on 'Lys-63'-linked polyubiquitin. Upon T-cell receptor (TCR)-mediated T-cell activation, deubiquitinates 'Lys-63'-polyubiquitin chains on MALT1 thereby mediating disassociation of the CBM (CARD11:BCL10:MALT1) and IKK complexes and preventing sustained IKK activation. Deubiquitinates NEMO/IKBKG; the function is facilitated by TNIP1 and leads to inhibition of NF-kappa-B activation. Upon stimulation by bacterial peptidoglycans, probably deubiquitinates RIPK2. Can also inhibit I-kappa-B-kinase (IKK) through a non-catalytic mechanism which involves polyubiquitin; polyubiquitin promotes association with IKBKG and prevents IKK MAP3K7-mediated phosphorylation. Targets TRAF2 for lysosomal degradation. In vitro able to deubiquitinate 'Lys-11'-, 'Lys-48'- and 'Lys-63' polyubiquitin chains. Inhibitor of programmed cell death. Has a role in the function of the lymphoid system. Required for LPS-induced production of pro-inflammatory cytokines and IFN beta in LPS-tolerized macrophages. The polypeptide is Tumor necrosis factor alpha-induced protein 3 (TNFAIP3) (Homo sapiens (Human)).